We begin with the raw amino-acid sequence, 248 residues long: tRNA (guanine-N(1)-)-methyltransferase (248 aa).

Residues Gly113 and 133–138 (IGDYVL) contribute to the S-adenosyl-L-methionine site.

Belongs to the RNA methyltransferase TrmD family. As to quaternary structure, homodimer.

Its subcellular location is the cytoplasm. The catalysed reaction is guanosine(37) in tRNA + S-adenosyl-L-methionine = N(1)-methylguanosine(37) in tRNA + S-adenosyl-L-homocysteine + H(+). In terms of biological role, specifically methylates guanosine-37 in various tRNAs. This Shewanella denitrificans (strain OS217 / ATCC BAA-1090 / DSM 15013) protein is tRNA (guanine-N(1)-)-methyltransferase.